We begin with the raw amino-acid sequence, 692 residues long: Elongation factor G (692 aa).

The 276-residue stretch at 9–284 (HKVRNIGIAA…AVVDYLPAPD (276 aa)) folds into the tr-type G domain. GTP-binding positions include 18–25 (AHIDAGKT), 82–86 (DTPGH), and 136–139 (NKMD).

The protein belongs to the TRAFAC class translation factor GTPase superfamily. Classic translation factor GTPase family. EF-G/EF-2 subfamily.

Its subcellular location is the cytoplasm. In terms of biological role, catalyzes the GTP-dependent ribosomal translocation step during translation elongation. During this step, the ribosome changes from the pre-translocational (PRE) to the post-translocational (POST) state as the newly formed A-site-bound peptidyl-tRNA and P-site-bound deacylated tRNA move to the P and E sites, respectively. Catalyzes the coordinated movement of the two tRNA molecules, the mRNA and conformational changes in the ribosome. The polypeptide is Elongation factor G (Campylobacter concisus (strain 13826)).